The primary structure comprises 570 residues: Sulfite reductase [NADPH] hemoprotein beta-component 1 (570 aa).

[4Fe-4S] cluster-binding residues include cysteine 434, cysteine 440, cysteine 479, and cysteine 483. Cysteine 483 serves as a coordination point for siroheme.

The protein belongs to the nitrite and sulfite reductase 4Fe-4S domain family. Alpha(8)-beta(8). The alpha component is a flavoprotein, the beta component is a hemoprotein. Siroheme is required as a cofactor. [4Fe-4S] cluster serves as cofactor.

The enzyme catalyses hydrogen sulfide + 3 NADP(+) + 3 H2O = sulfite + 3 NADPH + 4 H(+). Its pathway is sulfur metabolism; hydrogen sulfide biosynthesis; hydrogen sulfide from sulfite (NADPH route): step 1/1. In terms of biological role, component of the sulfite reductase complex that catalyzes the 6-electron reduction of sulfite to sulfide. This is one of several activities required for the biosynthesis of L-cysteine from sulfate. This is Sulfite reductase [NADPH] hemoprotein beta-component 1 from Klebsiella pneumoniae (strain 342).